A 505-amino-acid chain; its full sequence is Protein phosphatase 1J (505 aa).

The interval 1–103 (MLNRVRSAVA…PPDTGRRLPW (103 aa)) is disordered. The segment covering 27 to 50 (DLPNAASAPPAAAPEAPRSPPAKA) has biased composition (low complexity). Ser-66 and Ser-76 each carry phosphoserine. Residues 104-498 (STGYAEVINA…DDISVFVIPL (395 aa)) form the PPM-type phosphatase domain.

It belongs to the PP2C family. Interacts with UBE2I/UBC9.

It catalyses the reaction O-phospho-L-seryl-[protein] + H2O = L-seryl-[protein] + phosphate. The catalysed reaction is O-phospho-L-threonyl-[protein] + H2O = L-threonyl-[protein] + phosphate. This is Protein phosphatase 1J (PPM1J) from Homo sapiens (Human).